A 336-amino-acid polypeptide reads, in one-letter code: Tetraacyldisaccharide 4'-kinase (336 aa).

An ATP-binding site is contributed by 60 to 67; that stretch reads TAGGNGKT.

This sequence belongs to the LpxK family.

The enzyme catalyses a lipid A disaccharide + ATP = a lipid IVA + ADP + H(+). It participates in glycolipid biosynthesis; lipid IV(A) biosynthesis; lipid IV(A) from (3R)-3-hydroxytetradecanoyl-[acyl-carrier-protein] and UDP-N-acetyl-alpha-D-glucosamine: step 6/6. Transfers the gamma-phosphate of ATP to the 4'-position of a tetraacyldisaccharide 1-phosphate intermediate (termed DS-1-P) to form tetraacyldisaccharide 1,4'-bis-phosphate (lipid IVA). In Vibrio cholerae serotype O1 (strain ATCC 39315 / El Tor Inaba N16961), this protein is Tetraacyldisaccharide 4'-kinase.